The primary structure comprises 270 residues: Glucosamine-6-phosphate deaminase (270 aa).

The Proton acceptor; for enolization step role is filled by Asp72. Asp141 functions as the For ring-opening step in the catalytic mechanism. His143 (proton acceptor; for ring-opening step) is an active-site residue. Catalysis depends on Glu148, which acts as the For ring-opening step.

The protein belongs to the glucosamine/galactosamine-6-phosphate isomerase family. NagB subfamily. Homohexamer.

The catalysed reaction is alpha-D-glucosamine 6-phosphate + H2O = beta-D-fructose 6-phosphate + NH4(+). It functions in the pathway amino-sugar metabolism; N-acetylneuraminate degradation; D-fructose 6-phosphate from N-acetylneuraminate: step 5/5. Allosterically activated by N-acetylglucosamine 6-phosphate (GlcNAc6P). Catalyzes the reversible isomerization-deamination of glucosamine 6-phosphate (GlcN6P) to form fructose 6-phosphate (Fru6P) and ammonium ion. This is Glucosamine-6-phosphate deaminase from Haemophilus influenzae (strain 86-028NP).